The chain runs to 309 residues: DnaJ homolog subfamily B member 7 (309 aa).

The 67-residue stretch at 3 to 69 folds into the J domain; that stretch reads DYYEVLGLQR…EKRDIYDKYG (67 aa). Residues 282 to 309 are disordered; that stretch reads FSAGVKEGGKRKKKKRKEVQKKSTKRNC. Residues 290–309 are compositionally biased toward basic residues; that stretch reads GKRKKKKRKEVQKKSTKRNC.

Its function is as follows. Probably acts as a co-chaperone. The protein is DnaJ homolog subfamily B member 7 (DNAJB7) of Homo sapiens (Human).